The chain runs to 242 residues: MGTNYRRVLLKLSGEALMGNMGYGIDPEVVKEIAQEIAEVIATGVQIAIVVGGGNIFRGVKAASAGMDRATADYIGMIATVMNAMTLQDSLERIGVQTRVQTAIAMQELAEPYIRRRAIRHLEKGRVVIFGAGSGNPFFTTDTTAALRAAEIDAEVIFKATKVDGVYDADPEIYPNAKRYNSLTYAHVLAQDLRVMDSTAIALCKENNIPILVFDLTTRGNIRRAVLGESIGTLVGGSCEIS.

11–14 is an ATP binding site; that stretch reads KLSG. Residues 19–24 form an involved in allosteric activation by GTP region; that stretch reads GNMGYG. Gly-53 serves as a coordination point for UMP. ATP is bound by residues Gly-54 and Arg-58. UMP is bound by residues Asp-73 and 134 to 141; that span reads SGNPFFTT. Residues Thr-161, Tyr-167, and Asp-170 each coordinate ATP.

This sequence belongs to the UMP kinase family. In terms of assembly, homohexamer.

The protein resides in the cytoplasm. The enzyme catalyses UMP + ATP = UDP + ADP. Its pathway is pyrimidine metabolism; CTP biosynthesis via de novo pathway; UDP from UMP (UMPK route): step 1/1. Allosterically activated by GTP. Inhibited by UTP. Its function is as follows. Catalyzes the reversible phosphorylation of UMP to UDP. The protein is Uridylate kinase of Nostoc sp. (strain PCC 7120 / SAG 25.82 / UTEX 2576).